The sequence spans 238 residues: Pyridoxine 5'-phosphate synthase (238 aa).

Position 7 (N7) interacts with 3-amino-2-oxopropyl phosphate. A 1-deoxy-D-xylulose 5-phosphate-binding site is contributed by 9–10 (DH). R18 is a 3-amino-2-oxopropyl phosphate binding site. Catalysis depends on H43, which acts as the Proton acceptor. 1-deoxy-D-xylulose 5-phosphate is bound by residues R45 and H50. E70 serves as the catalytic Proton acceptor. Position 100 (T100) interacts with 1-deoxy-D-xylulose 5-phosphate. H191 serves as the catalytic Proton donor. 3-amino-2-oxopropyl phosphate-binding positions include G192 and 213-214 (GH).

The protein belongs to the PNP synthase family. In terms of assembly, homooctamer; tetramer of dimers.

It is found in the cytoplasm. The catalysed reaction is 3-amino-2-oxopropyl phosphate + 1-deoxy-D-xylulose 5-phosphate = pyridoxine 5'-phosphate + phosphate + 2 H2O + H(+). The protein operates within cofactor biosynthesis; pyridoxine 5'-phosphate biosynthesis; pyridoxine 5'-phosphate from D-erythrose 4-phosphate: step 5/5. Catalyzes the complicated ring closure reaction between the two acyclic compounds 1-deoxy-D-xylulose-5-phosphate (DXP) and 3-amino-2-oxopropyl phosphate (1-amino-acetone-3-phosphate or AAP) to form pyridoxine 5'-phosphate (PNP) and inorganic phosphate. The chain is Pyridoxine 5'-phosphate synthase from Syntrophobacter fumaroxidans (strain DSM 10017 / MPOB).